A 238-amino-acid polypeptide reads, in one-letter code: Ribosome-recycling factor, mitochondrial (238 aa).

This sequence belongs to the RRF family.

The protein localises to the mitochondrion. In terms of biological role, responsible for the release of ribosomes from messenger RNA at the termination of protein biosynthesis. May increase the efficiency of translation by recycling ribosomes from one round of translation to another. The chain is Ribosome-recycling factor, mitochondrial from Caenorhabditis elegans.